A 167-amino-acid polypeptide reads, in one-letter code: Phosphopantetheine adenylyltransferase (167 aa).

Serine 10 provides a ligand contact to substrate. Residues 10–11 (SF) and histidine 18 contribute to the ATP site. Residues lysine 42, alanine 79, and arginine 93 each coordinate substrate. ATP is bound by residues 94-96 (GLR), glutamate 104, and 129-135 (VRHITAT).

It belongs to the bacterial CoaD family. As to quaternary structure, homohexamer. It depends on Mg(2+) as a cofactor.

It is found in the cytoplasm. It catalyses the reaction (R)-4'-phosphopantetheine + ATP + H(+) = 3'-dephospho-CoA + diphosphate. Its pathway is cofactor biosynthesis; coenzyme A biosynthesis; CoA from (R)-pantothenate: step 4/5. Reversibly transfers an adenylyl group from ATP to 4'-phosphopantetheine, yielding dephospho-CoA (dPCoA) and pyrophosphate. This Beijerinckia indica subsp. indica (strain ATCC 9039 / DSM 1715 / NCIMB 8712) protein is Phosphopantetheine adenylyltransferase.